A 280-amino-acid polypeptide reads, in one-letter code: Elongation factor 1-delta (280 aa).

At alanine 2 the chain carries N-acetylalanine. Lysine 17 is modified (N6-acetyllysine). Residues serine 37, serine 44, serine 60, serine 86, and serine 106 each carry the phosphoserine modification. N6-acetyllysine is present on lysine 107. The interval 113–171 is disordered; sequence SALEKSSPAHRATTPQTQHVSPMRQVEPPSRKAATATEDDEDDDIDLFGSDEEEDKEAT. Position 117 is an N6-acetyllysine; alternate (lysine 117). Lysine 117 is subject to N6-succinyllysine; alternate. Serine 119 carries the phosphoserine modification. Threonine 129 is subject to Phosphothreonine. Serine 133 is subject to Phosphoserine. A Phosphothreonine modification is found at threonine 147. Residues 149–168 are compositionally biased toward acidic residues; that stretch reads TEDDEDDDIDLFGSDEEEDK. At serine 162 the chain carries Phosphoserine; by CK2.

The protein belongs to the EF-1-beta/EF-1-delta family. As to quaternary structure, EF-1 is composed of 4 subunits: alpha, beta, delta, and gamma.

Functionally, EF-1-beta and EF-1-delta stimulate the exchange of GDP bound to EF-1-alpha to GTP. The chain is Elongation factor 1-delta (EEF1D) from Bos taurus (Bovine).